Here is a 234-residue protein sequence, read N- to C-terminus: MAHVAKKYKAAAEKVDRTKRYKLDEAMSLVKQTATKKFDETVDASINLGVDPKHADQVVRGAVVLPHGMGKTVRLAVFAKGDKAKEAQEAGADIVGAEDLAEKIQGGFMDFDKLIATPDMMGVVGRLGKILGPRGLMPNPKVGTVTMDLARAVKEQKAGKVEFRVEKAGIVHVPFGKASFDPDKLKANFSAIMEVIYKAKPQTAKGVYVKNVTLSTTMGPGIKVDLAELAAQHA.

It belongs to the universal ribosomal protein uL1 family. In terms of assembly, part of the 50S ribosomal subunit.

Binds directly to 23S rRNA. The L1 stalk is quite mobile in the ribosome, and is involved in E site tRNA release. In terms of biological role, protein L1 is also a translational repressor protein, it controls the translation of the L11 operon by binding to its mRNA. The sequence is that of Large ribosomal subunit protein uL1 from Anaeromyxobacter dehalogenans (strain 2CP-1 / ATCC BAA-258).